The sequence spans 97 residues: ATP-dependent Clp protease adapter protein ClpS (97 aa).

It belongs to the ClpS family. As to quaternary structure, binds to the N-terminal domain of the chaperone ClpA.

Functionally, involved in the modulation of the specificity of the ClpAP-mediated ATP-dependent protein degradation. This chain is ATP-dependent Clp protease adapter protein ClpS, found in Nautilia profundicola (strain ATCC BAA-1463 / DSM 18972 / AmH).